The sequence spans 372 residues: DNA-directed RNA polymerase subunit alpha (372 aa).

Positions 1–268 are alpha N-terminal domain (alpha-NTD); sequence MIFDEDSNSV…DQFQPFINFD (268 aa). The tract at residues 280–372 is alpha C-terminal domain (alpha-CTD); sequence KDALPYDSNL…ESLSKQYSEE (93 aa).

Belongs to the RNA polymerase alpha chain family. As to quaternary structure, homodimer. The RNAP catalytic core consists of 2 alpha, 1 beta, 1 beta' and 1 omega subunit. When a sigma factor is associated with the core the holoenzyme is formed, which can initiate transcription.

The catalysed reaction is RNA(n) + a ribonucleoside 5'-triphosphate = RNA(n+1) + diphosphate. DNA-dependent RNA polymerase catalyzes the transcription of DNA into RNA using the four ribonucleoside triphosphates as substrates. The chain is DNA-directed RNA polymerase subunit alpha from Ehrlichia canis (strain Jake).